The chain runs to 203 residues: ATP-dependent Clp protease proteolytic subunit 2 (203 aa).

The Nucleophile role is filled by Ser101. His126 is an active-site residue.

The protein belongs to the peptidase S14 family. As to quaternary structure, fourteen ClpP subunits assemble into 2 heptameric rings which stack back to back to give a disk-like structure with a central cavity, resembling the structure of eukaryotic proteasomes.

The protein localises to the cytoplasm. It catalyses the reaction Hydrolysis of proteins to small peptides in the presence of ATP and magnesium. alpha-casein is the usual test substrate. In the absence of ATP, only oligopeptides shorter than five residues are hydrolyzed (such as succinyl-Leu-Tyr-|-NHMec, and Leu-Tyr-Leu-|-Tyr-Trp, in which cleavage of the -Tyr-|-Leu- and -Tyr-|-Trp bonds also occurs).. In terms of biological role, cleaves peptides in various proteins in a process that requires ATP hydrolysis. Has a chymotrypsin-like activity. Plays a major role in the degradation of misfolded proteins. This Prochlorococcus marinus (strain MIT 9312) protein is ATP-dependent Clp protease proteolytic subunit 2.